The chain runs to 170 residues: MFPMVTGFINYGQQTIRAARYIGQSFMITLSHANRLPVTIQYPYEKLITSERFRGRIHFEFDKCIACEVCVRACPIDLPVVDWKLETDIRKKRLLNYSIDFGICIFCGNCVEYCPTNCLSMTEEYELSTYDRHELNYNQIALGRLPISITDDYTIRTILNSPQTKEKACD.

4Fe-4S ferredoxin-type domains are found at residues 55 to 84 (GRIH…VDWK) and 95 to 124 (LNYS…MTEE). The [4Fe-4S] cluster site is built by Cys64, Cys67, Cys70, Cys74, Cys104, Cys107, Cys110, and Cys114.

It belongs to the complex I 23 kDa subunit family. NDH is composed of at least 16 different subunits, 5 of which are encoded in the nucleus. [4Fe-4S] cluster serves as cofactor.

It is found in the plastid. The protein resides in the chloroplast thylakoid membrane. It carries out the reaction a plastoquinone + NADH + (n+1) H(+)(in) = a plastoquinol + NAD(+) + n H(+)(out). It catalyses the reaction a plastoquinone + NADPH + (n+1) H(+)(in) = a plastoquinol + NADP(+) + n H(+)(out). In terms of biological role, NDH shuttles electrons from NAD(P)H:plastoquinone, via FMN and iron-sulfur (Fe-S) centers, to quinones in the photosynthetic chain and possibly in a chloroplast respiratory chain. The immediate electron acceptor for the enzyme in this species is believed to be plastoquinone. Couples the redox reaction to proton translocation, and thus conserves the redox energy in a proton gradient. The chain is NAD(P)H-quinone oxidoreductase subunit I, chloroplastic from Spinacia oleracea (Spinach).